The primary structure comprises 793 residues: Toll-like receptor 2 type-1 (793 aa).

The signal sequence occupies residues methionine 1–alanine 25. Residues alanine 26 to serine 597 lie on the Extracellular side of the membrane. A disulfide bridge links cysteine 41 with cysteine 47. Residue asparagine 48 is glycosylated (N-linked (GlcNAc...) asparagine). LRR repeat units follow at residues lysine 64 to lysine 85, asparagine 88 to serine 109, lysine 112 to proline 133, serine 136 to serine 157, asparagine 161 to glycine 182, and phenylalanine 185 to serine 206. Residue asparagine 120 is glycosylated (N-linked (GlcNAc...) asparagine). N-linked (GlcNAc...) asparagine glycans are attached at residues asparagine 161, asparagine 195, asparagine 254, and asparagine 325. Cysteine 362 and cysteine 391 are disulfide-bonded. LRR repeat units follow at residues serine 370 to cysteine 391, serine 397 to isoleucine 418, lysine 423 to proline 444, asparagine 446 to threonine 467, leucine 468 to proline 486, phenylalanine 487 to proline 508, and asparagine 509 to serine 530. Asparagine 402 carries an N-linked (GlcNAc...) asparagine glycan. Cysteine 441 and cysteine 463 form a disulfide bridge. The N-linked (GlcNAc...) asparagine glycan is linked to asparagine 451. The LRRCT domain occupies asparagine 542–arginine 596. The helical transmembrane segment at leucine 598–glycine 618 threads the bilayer. Residues tyrosine 619 to serine 793 lie on the Cytoplasmic side of the membrane. Residues isoleucine 648–leucine 791 form the TIR domain.

This sequence belongs to the Toll-like receptor family. As to quaternary structure, binds MYD88 (via TIR domain). In terms of processing, N-glycosylated. TLR2-1 is more heavily glycosylated than TLR2-2. In terms of tissue distribution, highly expressed in ovary. Detected at lower levels in heart, lung, gizzard and testis.

It localises to the membrane. Its function is as follows. Participates in the innate immune response to microbial agents. Acts via MYD88 and TRAF6, leading to NF-kappa-B activation, cytokine secretion and the inflammatory response. Does not respond to LPS and responds with less ability than TLR2-2 to mycoplasmal macrophage-activating lipopeptide-2kD (MALP-2). This chain is Toll-like receptor 2 type-1 (TLR2-1), found in Gallus gallus (Chicken).